The sequence spans 346 residues: Cysteinyl leukotriene receptor 2 (346 aa).

The Extracellular portion of the chain corresponds to 1 to 42; sequence MERKFMSLQPSISVSEMEPNGTFSNNNSRNCTIENFKREFFP. N-linked (GlcNAc...) asparagine glycans are attached at residues Asn20, Asn26, and Asn30. A helical membrane pass occupies residues 43–63; sequence IVYLIIFFWGVLGNGLSIYVF. The Cytoplasmic segment spans residues 64–72; it reads LQPYKKSTS. The chain crosses the membrane as a helical span at residues 73 to 93; sequence VNVFMLNLAISDLLFISTLPF. The Extracellular portion of the chain corresponds to 94-123; the sequence is RADYYLRGSNWIFGDLACRIMSYSLYVNMY. A disulfide bridge links Cys111 with Cys187. A helical membrane pass occupies residues 124–144; the sequence is SSIYFLTVLSVVRFLAMVHPF. The Cytoplasmic segment spans residues 145-153; it reads RLLHVTSIR. A helical membrane pass occupies residues 154–174; the sequence is SAWILCGIIWILIMASSIMLL. At 175-204 the chain is on the extracellular side; the sequence is DSGSEQNGSVTSCLELNLYKIAKLQTMNYI. The N-linked (GlcNAc...) asparagine glycan is linked to Asn181. A helical transmembrane segment spans residues 205 to 225; sequence ALVVGCLLPFFTLSICYLLII. The Cytoplasmic segment spans residues 226–245; it reads RVLLKVEVPESGLRVSHRKA. The helical transmembrane segment at 246–266 threads the bilayer; it reads LTTIIITLIIFFLCFLPYHTL. Residues 267–286 lie on the Extracellular side of the membrane; the sequence is RTVHLTTWKVGLCKDRLHKA. A helical membrane pass occupies residues 287-307; it reads LVITLALAAANACFNPLLYYF. Topologically, residues 308–346 are cytoplasmic; sequence AGENFKDRLKSALRKGHPQKAKTKCVFPVSVWLRKETRV.

This sequence belongs to the G-protein coupled receptor 1 family. As to expression, widely expressed, with highest levels in the heart, placenta, spleen, peripheral blood leukocytes and adrenal gland. In lung, expressed in the interstitial macrophages, and slightly in smooth muscle cells.

The protein localises to the cell membrane. Receptor for cysteinyl leukotrienes. The response is mediated via a G-protein that activates a phosphatidylinositol-calcium second messenger system. Stimulation by BAY u9773, a partial agonist, induces specific contractions of pulmonary veins and might also have an indirect role in the relaxation of the pulmonary vascular endothelium. The rank order of affinities for the leukotrienes is LTC4 = LTD4 &gt;&gt; LTE4. This chain is Cysteinyl leukotriene receptor 2 (CYSLTR2), found in Homo sapiens (Human).